The primary structure comprises 428 residues: Adenylosuccinate synthetase (428 aa).

Residues 12 to 18 (GDEGKGK) and 40 to 42 (GHT) each bind GTP. The active-site Proton acceptor is D13. Mg(2+)-binding residues include D13 and G40. IMP-binding positions include 13–16 (DEGK), 38–41 (NAGH), T128, R142, Q222, T237, and R301. H41 serves as the catalytic Proton donor. Substrate is bound at residue 297–303 (VNTGRAR). Residues R303, 329–331 (KLD), and 411–413 (STS) each bind GTP.

The protein belongs to the adenylosuccinate synthetase family. Homodimer. Mg(2+) is required as a cofactor.

It localises to the cytoplasm. The enzyme catalyses IMP + L-aspartate + GTP = N(6)-(1,2-dicarboxyethyl)-AMP + GDP + phosphate + 2 H(+). It participates in purine metabolism; AMP biosynthesis via de novo pathway; AMP from IMP: step 1/2. Its function is as follows. Plays an important role in the de novo pathway of purine nucleotide biosynthesis. Catalyzes the first committed step in the biosynthesis of AMP from IMP. This chain is Adenylosuccinate synthetase, found in Caulobacter sp. (strain K31).